A 312-amino-acid polypeptide reads, in one-letter code: Glyoxylate/hydroxypyruvate reductase A (312 aa).

Residue Arg-227 is part of the active site. The active-site Proton donor is the His-275.

It belongs to the D-isomer specific 2-hydroxyacid dehydrogenase family. GhrA subfamily.

It localises to the cytoplasm. It catalyses the reaction glycolate + NADP(+) = glyoxylate + NADPH + H(+). It carries out the reaction (R)-glycerate + NAD(+) = 3-hydroxypyruvate + NADH + H(+). The catalysed reaction is (R)-glycerate + NADP(+) = 3-hydroxypyruvate + NADPH + H(+). Catalyzes the NADPH-dependent reduction of glyoxylate and hydroxypyruvate into glycolate and glycerate, respectively. The chain is Glyoxylate/hydroxypyruvate reductase A from Escherichia coli O7:K1 (strain IAI39 / ExPEC).